A 338-amino-acid polypeptide reads, in one-letter code: uncharacterized protein (338 aa).

The chain crosses the membrane as a helical span at residues 20–40 (IFFTLTFSLSNLFLAICYLFL).

The protein resides in the membrane. This is an uncharacterized protein from Schizosaccharomyces pombe (strain 972 / ATCC 24843) (Fission yeast).